The sequence spans 161 residues: Nucleotide-binding protein xcc-b100_3818 (161 aa).

Belongs to the YajQ family.

Functionally, nucleotide-binding protein. The protein is Nucleotide-binding protein xcc-b100_3818 of Xanthomonas campestris pv. campestris (strain B100).